Here is a 206-residue protein sequence, read N- to C-terminus: Uridine kinase (206 aa).

Residue 11–18 (GGSASGKT) coordinates ATP.

The protein belongs to the uridine kinase family.

The protein localises to the cytoplasm. The enzyme catalyses uridine + ATP = UMP + ADP + H(+). It carries out the reaction cytidine + ATP = CMP + ADP + H(+). Its pathway is pyrimidine metabolism; CTP biosynthesis via salvage pathway; CTP from cytidine: step 1/3. The protein operates within pyrimidine metabolism; UMP biosynthesis via salvage pathway; UMP from uridine: step 1/1. In Lactococcus lactis subsp. cremoris (strain MG1363), this protein is Uridine kinase.